The chain runs to 405 residues: Tyrosine--tRNA ligase (405 aa).

Positions 48-57 match the 'HIGH' region motif; it reads PSRPDLHLGH. A 'KMSKS' region motif is present at residues 232–236; that stretch reads KMSKS. An ATP-binding site is contributed by lysine 235. The 62-residue stretch at 339-400 folds into the S4 RNA-binding domain; the sequence is LPLVDLLTTL…AGKRKFFRIA (62 aa).

It belongs to the class-I aminoacyl-tRNA synthetase family. TyrS type 2 subfamily. Homodimer.

It is found in the cytoplasm. It catalyses the reaction tRNA(Tyr) + L-tyrosine + ATP = L-tyrosyl-tRNA(Tyr) + AMP + diphosphate + H(+). Its function is as follows. Catalyzes the attachment of tyrosine to tRNA(Tyr) in a two-step reaction: tyrosine is first activated by ATP to form Tyr-AMP and then transferred to the acceptor end of tRNA(Tyr). In Chlorobium luteolum (strain DSM 273 / BCRC 81028 / 2530) (Pelodictyon luteolum), this protein is Tyrosine--tRNA ligase.